We begin with the raw amino-acid sequence, 326 residues long: Malate dehydrogenase (326 aa).

11–17 contributes to the NAD(+) binding site; sequence GAAGQIG. 2 residues coordinate substrate: Arg-92 and Arg-98. NAD(+)-binding positions include Asn-105, Gln-112, and 129 to 131; that span reads VGN. Substrate-binding residues include Asn-131 and Arg-162. Residue His-187 is the Proton acceptor of the active site.

Belongs to the LDH/MDH superfamily. MDH type 2 family.

The enzyme catalyses (S)-malate + NAD(+) = oxaloacetate + NADH + H(+). Functionally, catalyzes the reversible oxidation of malate to oxaloacetate. This chain is Malate dehydrogenase, found in Leptospira interrogans serogroup Icterohaemorrhagiae serovar Lai (strain 56601).